We begin with the raw amino-acid sequence, 688 residues long: Glycine--tRNA ligase beta subunit (688 aa).

The protein belongs to the class-II aminoacyl-tRNA synthetase family. Tetramer of two alpha and two beta subunits.

It is found in the cytoplasm. It catalyses the reaction tRNA(Gly) + glycine + ATP = glycyl-tRNA(Gly) + AMP + diphosphate. In Shewanella sp. (strain MR-4), this protein is Glycine--tRNA ligase beta subunit.